The chain runs to 146 residues: Small ribosomal subunit protein bS16 (146 aa).

Positions 119-146 are disordered; that stretch reads GSENKGGKSKKAEEKSAEKTAEKSEGEA. The segment covering 128–146 has biased composition (basic and acidic residues); that stretch reads KKAEEKSAEKTAEKSEGEA.

It belongs to the bacterial ribosomal protein bS16 family.

The polypeptide is Small ribosomal subunit protein bS16 (Thermobifida fusca (strain YX)).